Consider the following 253-residue polypeptide: Major prion protein (253 aa).

The first 22 residues, 1–22, serve as a signal peptide directing secretion; sequence MANLGCWMLVLFVATWSDLGLC. Residues 23 to 230 form an interaction with GRB2, ERI3 and SYN1 region; the sequence is KKRPKPGGWN…ESQAYYQRGS (208 aa). The disordered stretch occupies residues 26–108; the sequence is PKPGGWNTGG…WHKPSKPKTS (83 aa). 5 repeat units span residues 51–59, 60–67, 68–75, 76–83, and 84–91. The tract at residues 51 to 91 is 5 X 8 AA tandem repeats of P-H-G-G-G-W-G-Q; that stretch reads PQGGGGWGQPHGGGWGQPHGGGWGQPHGGGWGQPHGGGWGQ. The segment covering 52 to 95 has biased composition (gly residues); the sequence is QGGGGWGQPHGGGWGQPHGGGWGQPHGGGWGQPHGGGWGQGGGT. Cu(2+)-binding residues include His-61, Gly-62, Gly-63, His-69, Gly-70, Gly-71, His-77, Gly-78, Gly-79, His-85, Gly-86, and Gly-87. The span at 98–108 shows a compositional bias: basic residues; that stretch reads QWHKPSKPKTS. Cys-179 and Cys-214 are oxidised to a cystine. 2 N-linked (GlcNAc...) asparagine glycosylation sites follow: Asn-181 and Asn-197. Ser-230 carries the GPI-anchor amidated serine lipid modification. The propeptide at 231–253 is removed in mature form; that stretch reads SMVLFSSPPVILLISFLIFLIVG.

The protein belongs to the prion family. As to quaternary structure, monomer and homodimer. Has a tendency to aggregate into amyloid fibrils containing a cross-beta spine, formed by a steric zipper of superposed beta-strands. Soluble oligomers may represent an intermediate stage on the path to fibril formation. Copper binding may promote oligomerization. Interacts with GRB2, APP, ERI3/PRNPIP and SYN1. Mislocalized cytosolically exposed PrP interacts with MGRN1; this interaction alters MGRN1 subcellular location and causes lysosomal enlargement. Interacts with KIAA1191.

The protein localises to the cell membrane. Its subcellular location is the golgi apparatus. In terms of biological role, its primary physiological function is unclear. Has cytoprotective activity against internal or environmental stresses. May play a role in neuronal development and synaptic plasticity. May be required for neuronal myelin sheath maintenance. May play a role in iron uptake and iron homeostasis. Soluble oligomers are toxic to cultured neuroblastoma cells and induce apoptosis (in vitro). Association with GPC1 (via its heparan sulfate chains) targets PRNP to lipid rafts. Also provides Cu(2+) or Zn(2+) for the ascorbate-mediated GPC1 deaminase degradation of its heparan sulfate side chains. The polypeptide is Major prion protein (PRNP) (Macaca fascicularis (Crab-eating macaque)).